The following is a 443-amino-acid chain: GTPase Der (443 aa).

EngA-type G domains are found at residues 3–167 and 176–349; these read PTLV…PEPE and VRVA…AAAM. GTP contacts are provided by residues 9–16, 56–60, 119–122, 182–189, 229–233, and 294–297; these read GRPNVGKS, DTGGF, NKAE, DTAGM, and NKWD. The region spanning 350-434 is the KH-like domain; it reads AKMTTPRLTR…PLRIQFVTAK (85 aa).

It belongs to the TRAFAC class TrmE-Era-EngA-EngB-Septin-like GTPase superfamily. EngA (Der) GTPase family. Associates with the 50S ribosomal subunit.

Functionally, GTPase that plays an essential role in the late steps of ribosome biogenesis. The chain is GTPase Der from Dechloromonas aromatica (strain RCB).